The primary structure comprises 218 residues: Glycerol-3-phosphate acyltransferase (218 aa).

Transmembrane regions (helical) follow at residues 4–24 (IALGMIIFAYLCGSISSAILI), 54–74 (TAAIVLICDVLKGMIPVWLAY), 80–100 (PFYLGITAIAACLGHIYPIFF), 107–127 (GVATAFGAIAAIGWDLTGLMM), and 130–150 (WLLTILLSGYSSLGAIVSALI).

This sequence belongs to the PlsY family. Probably interacts with PlsX.

It is found in the cell inner membrane. The catalysed reaction is an acyl phosphate + sn-glycerol 3-phosphate = a 1-acyl-sn-glycero-3-phosphate + phosphate. Its pathway is lipid metabolism; phospholipid metabolism. Its function is as follows. Catalyzes the transfer of an acyl group from acyl-phosphate (acyl-PO(4)) to glycerol-3-phosphate (G3P) to form lysophosphatidic acid (LPA). This enzyme utilizes acyl-phosphate as fatty acyl donor, but not acyl-CoA or acyl-ACP. This chain is Glycerol-3-phosphate acyltransferase, found in Photorhabdus laumondii subsp. laumondii (strain DSM 15139 / CIP 105565 / TT01) (Photorhabdus luminescens subsp. laumondii).